A 249-amino-acid polypeptide reads, in one-letter code: MKAQVRTLTGEIAHEIDLPEIFREEYRPDLIKRAVLALQSTRFQPHGTNPYAGMRTSAESWGSGRGAAQVPRLKNGSRVARVPQATGGRAAHPPKVEKILVKEINRKEKRKALRSAVAASTYPDLVRERGHLFEGDLPLVFEDRFEEVTRTGDVIAALTALGVYADVERAKGSRKVRAGRGTMRGRRYKQRKSVLIVTGGEPLRAARNLAGVDAVAVDQLNAELLAPGTQAGRLTIWTESAIRRLEEFS.

This sequence belongs to the universal ribosomal protein uL4 family. As to quaternary structure, part of the 50S ribosomal subunit.

Its function is as follows. One of the primary rRNA binding proteins, this protein initially binds near the 5'-end of the 23S rRNA. It is important during the early stages of 50S assembly. It makes multiple contacts with different domains of the 23S rRNA in the assembled 50S subunit and ribosome. In terms of biological role, forms part of the polypeptide exit tunnel. The chain is Large ribosomal subunit protein uL4 from Methanoculleus marisnigri (strain ATCC 35101 / DSM 1498 / JR1).